The chain runs to 147 residues: Ponticulin-like protein C3 (147 aa).

Residues 1–20 (MKFTKSLLLLIVAVFASSNA) form the signal peptide. Asn118 carries GPI-like-anchor amidated asparagine lipidation. An N-linked (GlcNAc...) asparagine glycan is attached at Asn118. Positions 119–147 (SSESDSSDSTRIGASFALFALALLSMLAL) are cleaved as a propeptide — removed in mature form.

Belongs to the ponticulin family. In terms of processing, the GPI-like-anchor contains a phosphoceramide group, rather than a phosphatidyl group.

The protein localises to the cell membrane. This chain is Ponticulin-like protein C3 (ponC3), found in Dictyostelium discoideum (Social amoeba).